Reading from the N-terminus, the 552-residue chain is Cholesterol oxidase (552 aa).

The segment at residues 1–45 (MTDSRANRADATRGVASVSRRRFLAGAGLTAGAIALSSMSTSASA) is a signal peptide (tat-type signal). The FAD site is built by Tyr66, Gly67, Glu86, Gly160, Asn164, Gly165, Met167, and Val295. Catalysis depends on proton acceptor residues Glu406 and His492. Positions 520 and 532 each coordinate FAD.

It belongs to the GMC oxidoreductase family. Requires FAD as cofactor. Post-translationally, predicted to be exported by the Tat system. The position of the signal peptide cleavage has been experimentally proven.

The protein resides in the secreted. It catalyses the reaction cholesterol + O2 = cholest-5-en-3-one + H2O2. It carries out the reaction cholest-5-en-3-one = cholest-4-en-3-one. It functions in the pathway steroid metabolism; cholesterol degradation. In terms of biological role, bifunctional enzyme that catalyzes the oxidation and isomerization of cholesterol to cholestenone (cholest-4-en-3-one), an initial step in the cholesterol degradation process. The polypeptide is Cholesterol oxidase (Brevibacterium sterolicum).